A 156-amino-acid polypeptide reads, in one-letter code: 6,7-dimethyl-8-ribityllumazine synthase (156 aa).

5-amino-6-(D-ribitylamino)uracil is bound by residues phenylalanine 23, 57–59 (AFE), and 81–83 (AVI). 86-87 (ST) contacts (2S)-2-hydroxy-3-oxobutyl phosphate. The active-site Proton donor is the histidine 89. A 5-amino-6-(D-ribitylamino)uracil-binding site is contributed by phenylalanine 114. Residue arginine 128 participates in (2S)-2-hydroxy-3-oxobutyl phosphate binding.

The protein belongs to the DMRL synthase family.

The enzyme catalyses (2S)-2-hydroxy-3-oxobutyl phosphate + 5-amino-6-(D-ribitylamino)uracil = 6,7-dimethyl-8-(1-D-ribityl)lumazine + phosphate + 2 H2O + H(+). The protein operates within cofactor biosynthesis; riboflavin biosynthesis; riboflavin from 2-hydroxy-3-oxobutyl phosphate and 5-amino-6-(D-ribitylamino)uracil: step 1/2. Its function is as follows. Catalyzes the formation of 6,7-dimethyl-8-ribityllumazine by condensation of 5-amino-6-(D-ribitylamino)uracil with 3,4-dihydroxy-2-butanone 4-phosphate. This is the penultimate step in the biosynthesis of riboflavin. The protein is 6,7-dimethyl-8-ribityllumazine synthase of Sulfurospirillum multivorans (Dehalospirillum multivorans).